The sequence spans 134 residues: Small ribosomal subunit protein uS8 (134 aa).

Belongs to the universal ribosomal protein uS8 family. As to quaternary structure, part of the 30S ribosomal subunit. Contacts proteins S5 and S12.

Functionally, one of the primary rRNA binding proteins, it binds directly to 16S rRNA central domain where it helps coordinate assembly of the platform of the 30S subunit. This is Small ribosomal subunit protein uS8 from Thermosipho melanesiensis (strain DSM 12029 / CIP 104789 / BI429).